A 418-amino-acid chain; its full sequence is 3-deoxy-D-manno-octulosonic acid transferase (418 aa).

A helical; Signal-anchor transmembrane segment spans residues 7-27 (FLSFLLLPIYFVIIFIRLLIG). The active-site Proton acceptor is Glu-60. Residues 264–265 (PR), 305–307 (FGE), and 330–333 (NILE) contribute to the CMP site.

The protein belongs to the glycosyltransferase group 1 family. Glycosyltransferase 30 subfamily.

It localises to the cell inner membrane. It catalyses the reaction lipid IVA (E. coli) + CMP-3-deoxy-beta-D-manno-octulosonate = alpha-Kdo-(2-&gt;6)-lipid IVA (E. coli) + CMP + H(+). It functions in the pathway bacterial outer membrane biogenesis; LPS core biosynthesis. Its function is as follows. Involved in lipopolysaccharide (LPS) biosynthesis. Catalyzes the transfer of 3-deoxy-D-manno-octulosonate (Kdo) residue(s) from CMP-Kdo to lipid IV(A), the tetraacyldisaccharide-1,4'-bisphosphate precursor of lipid A. This Rickettsia bellii (strain RML369-C) protein is 3-deoxy-D-manno-octulosonic acid transferase (waaA).